A 36-amino-acid chain; its full sequence is Insecticidal toxin LaIT1 (36 aa).

2 disulfides stabilise this stretch: Cys-11–Cys-23 and Cys-17–Cys-29.

In terms of tissue distribution, expressed by the venom gland.

The protein resides in the secreted. Functionally, affects the activity of both ryanodine-sensitive calcium-release channels RyR1 and RyR2 with high potency. At lower concentrations the toxin increases full openings of the RyRs, and at higher concentrations it inhibits full openings and induce openings to subconductance levels and reduces the number of full conductance openings. The different actions may be attributed to the toxins binding at different sites on the RyRs, with binding at a high-affinity site mediating the increase in full openings and the induction of subconductance states evoked upon binding to a lower-affinity site. Shows insect lethality against crickets and common cutworms (only shows paralysis against cockroaches), but no toxicity is observed in mice. This Liocheles australasiae (Dwarf wood scorpion) protein is Insecticidal toxin LaIT1.